The sequence spans 406 residues: Transposase for insertion sequence element IS1001 (406 aa).

Belongs to the transposase 12 family.

Functionally, involved in the transposition of the insertion sequence. This chain is Transposase for insertion sequence element IS1001 (tnpA), found in Bordetella parapertussis.